The primary structure comprises 934 residues: Bifunctional uridylyltransferase/uridylyl-removing enzyme (934 aa).

The interval 1–379 is uridylyltransferase; it reads MSAHDLKLEE…TFSRRKRKLS (379 aa). The uridylyl-removing stretch occupies residues 380–736; that stretch reads DDGAFISENH…AKPHAFEAVT (357 aa). The region spanning 496–613 is the HD domain; the sequence is VDEHLLRCIA…IDFADTVQTM (118 aa). ACT domains follow at residues 737–818 and 848–931; these read EITV…DMLA and VIEV…RSPQ.

The protein belongs to the GlnD family. Mg(2+) serves as cofactor.

It catalyses the reaction [protein-PII]-L-tyrosine + UTP = [protein-PII]-uridylyl-L-tyrosine + diphosphate. The catalysed reaction is [protein-PII]-uridylyl-L-tyrosine + H2O = [protein-PII]-L-tyrosine + UMP + H(+). Its activity is regulated as follows. Uridylyltransferase (UTase) activity is inhibited by glutamine, while glutamine activates uridylyl-removing (UR) activity. Modifies, by uridylylation and deuridylylation, the PII regulatory proteins (GlnB and homologs), in response to the nitrogen status of the cell that GlnD senses through the glutamine level. Under low glutamine levels, catalyzes the conversion of the PII proteins and UTP to PII-UMP and PPi, while under higher glutamine levels, GlnD hydrolyzes PII-UMP to PII and UMP (deuridylylation). Thus, controls uridylylation state and activity of the PII proteins, and plays an important role in the regulation of nitrogen assimilation and metabolism. This is Bifunctional uridylyltransferase/uridylyl-removing enzyme from Brucella suis (strain ATCC 23445 / NCTC 10510).